An 807-amino-acid polypeptide reads, in one-letter code: Glycerol-3-phosphate acyltransferase (807 aa).

The HXXXXD motif motif lies at 308 to 313 (CHRSHM).

Belongs to the GPAT/DAPAT family.

It is found in the cell inner membrane. It catalyses the reaction sn-glycerol 3-phosphate + an acyl-CoA = a 1-acyl-sn-glycero-3-phosphate + CoA. It participates in phospholipid metabolism; CDP-diacylglycerol biosynthesis; CDP-diacylglycerol from sn-glycerol 3-phosphate: step 1/3. The protein is Glycerol-3-phosphate acyltransferase of Shewanella frigidimarina (strain NCIMB 400).